The following is a 219-amino-acid chain: MTAEADGEDPAERKMRFLFAVRSRGVTDARVLAAMERIDRGAFVRGIFADRAYEDMPLPIACGQTISQPSVVGLMSQALAVNPRDKVLEVGTGSGYQAAVLSQLARRVYTVDRHRRLVREATEVFHRLSLTNITALIADGSFGLPEQAPFDRILVTAAAEDPPGPLLAQLKIGGIMVVPVGQTDAVQNLIKVTRLEQGYDYEELRPVRFVPLVEGIGSD.

The active site involves S67.

The protein belongs to the methyltransferase superfamily. L-isoaspartyl/D-aspartyl protein methyltransferase family.

The protein localises to the cytoplasm. It carries out the reaction [protein]-L-isoaspartate + S-adenosyl-L-methionine = [protein]-L-isoaspartate alpha-methyl ester + S-adenosyl-L-homocysteine. Functionally, catalyzes the methyl esterification of L-isoaspartyl residues in peptides and proteins that result from spontaneous decomposition of normal L-aspartyl and L-asparaginyl residues. It plays a role in the repair and/or degradation of damaged proteins. The chain is Protein-L-isoaspartate O-methyltransferase from Cereibacter sphaeroides (strain ATCC 17029 / ATH 2.4.9) (Rhodobacter sphaeroides).